Here is a 307-residue protein sequence, read N- to C-terminus: Ribonuclease Z (307 aa).

Zn(2+) is bound by residues His-63, His-65, Asp-67, His-68, His-143, Asp-213, and His-271. Residue Asp-67 is the Proton acceptor of the active site.

The protein belongs to the RNase Z family. In terms of assembly, homodimer. Zn(2+) serves as cofactor.

The enzyme catalyses Endonucleolytic cleavage of RNA, removing extra 3' nucleotides from tRNA precursor, generating 3' termini of tRNAs. A 3'-hydroxy group is left at the tRNA terminus and a 5'-phosphoryl group is left at the trailer molecule.. Zinc phosphodiesterase, which displays some tRNA 3'-processing endonuclease activity. Probably involved in tRNA maturation, by removing a 3'-trailer from precursor tRNA. This chain is Ribonuclease Z, found in Lactococcus lactis subsp. cremoris (strain SK11).